The primary structure comprises 346 residues: Biotin synthase (346 aa).

Positions 38 to 256 (QQVQVSTLLS…IAVARIMMPT (219 aa)) constitute a Radical SAM core domain. [4Fe-4S] cluster-binding residues include C53, C57, and C60. 4 residues coordinate [2Fe-2S] cluster: C97, C128, C188, and R260.

It belongs to the radical SAM superfamily. Biotin synthase family. Homodimer. [4Fe-4S] cluster serves as cofactor. The cofactor is [2Fe-2S] cluster.

It catalyses the reaction (4R,5S)-dethiobiotin + (sulfur carrier)-SH + 2 reduced [2Fe-2S]-[ferredoxin] + 2 S-adenosyl-L-methionine = (sulfur carrier)-H + biotin + 2 5'-deoxyadenosine + 2 L-methionine + 2 oxidized [2Fe-2S]-[ferredoxin]. It functions in the pathway cofactor biosynthesis; biotin biosynthesis; biotin from 7,8-diaminononanoate: step 2/2. Functionally, catalyzes the conversion of dethiobiotin (DTB) to biotin by the insertion of a sulfur atom into dethiobiotin via a radical-based mechanism. The chain is Biotin synthase from Salmonella dublin (strain CT_02021853).